Reading from the N-terminus, the 238-residue chain is MSKRKRVLVKFSGEALAGENGFGIDTAVLKFIASEIKELIENDIEVGIVIGGGNIVRGVSAAKDGIIKRTSGDHMGMLATVINSIAMREALERSGLEVRVQSAIKMEAICETFIVGRAQRHLEKGRVVIFAAGTGNPFFTTDTAATLRAIEIGSDMIIKATKVDGVYDKDPKKFKDAKLLKSLNYEKAMSDDIKVMDDTAIALAKDNALPILVCNMFKAGNLLKIINEEEAALYSVVK.

10–13 lines the ATP pocket; the sequence is KFSG. The interval 18–23 is involved in allosteric activation by GTP; sequence GENGFG. Glycine 52 serves as a coordination point for UMP. Positions 53 and 57 each coordinate ATP. UMP-binding positions include aspartate 73 and 134–141; that span reads TGNPFFTT. ATP is bound by residues threonine 161, tyrosine 167, and aspartate 170.

The protein belongs to the UMP kinase family. In terms of assembly, homohexamer.

It localises to the cytoplasm. The enzyme catalyses UMP + ATP = UDP + ADP. Its pathway is pyrimidine metabolism; CTP biosynthesis via de novo pathway; UDP from UMP (UMPK route): step 1/1. With respect to regulation, allosterically activated by GTP. Inhibited by UTP. In terms of biological role, catalyzes the reversible phosphorylation of UMP to UDP. This Campylobacter concisus (strain 13826) protein is Uridylate kinase.